The chain runs to 490 residues: Limb region 1 protein homolog (490 aa).

Topologically, residues 1 to 19 (MEGQDEVSAREQHFHSQVR) are extracellular. A helical membrane pass occupies residues 20–40 (ESTICFLLFAILYVVSYFIIT). The Cytoplasmic segment spans residues 41 to 62 (RYKRKSDEQEDEDAIVNRISLF). Residues 63-83 (LSTFTLAVSAGAVLLLPFSII) traverse the membrane as a helical segment. Residues 84-110 (SNEILLSFPQNYYIQWLNGSLIHGLWN) are Extracellular-facing. Residues 111-131 (LASLFSNLCLFVLMPFAFFFL) form a helical membrane-spanning segment. Residues 132–151 (ESEGFAGLKKGIRARILETL) lie on the Cytoplasmic side of the membrane. The helical transmembrane segment at 152 to 172 (VMLLLLALLILGIVWVASALI) threads the bilayer. The Extracellular portion of the chain corresponds to 173 to 187 (DNDAASMESLYDLWE). Residues 188–208 (FYLPYLYSCISLMGCLLLLLC) traverse the membrane as a helical segment. Residues 209-291 (TPVGLSRMFT…RKKASAWERN (83 aa)) are Cytoplasmic-facing. A coiled-coil region spans residues 250 to 287 (RLNGLSSSVEYNIMELEQELENVKTLKTKLERRKKASA). The chain crosses the membrane as a helical span at residues 292 to 312 (LVYPAVMVLLLIETSISVLLV). At 313 to 339 (ACNILCLLVDETAMPKGTRGPGIGNAS) the chain is on the extracellular side. Residues 340–360 (LSTFGFVGAALEIILIFYLMV) traverse the membrane as a helical segment. The Cytoplasmic portion of the chain corresponds to 361 to 383 (SSVVGFYSLRFFGNFTPKKDDTT). Residues 384-404 (MTKIIGNCVSILVLSSALPVM) form a helical membrane-spanning segment. The Extracellular segment spans residues 405–426 (SRTLGITRFDLLGDFGRFNWLG). A helical membrane pass occupies residues 427–447 (NFYIVLSYNLLFAIVTTLCLV). Residues 448-490 (RKFTSAVREELFKALGLHKLHLPNTSRDSETAKPSVNGHQKAL) lie on the Cytoplasmic side of the membrane.

This sequence belongs to the LIMR family. Widely expressed with strongest expression in heart and pancreas.

It is found in the membrane. In terms of biological role, putative membrane receptor. This chain is Limb region 1 protein homolog (LMBR1), found in Homo sapiens (Human).